Reading from the N-terminus, the 116-residue chain is Large ribosomal subunit protein uL18 (116 aa).

The protein belongs to the universal ribosomal protein uL18 family. As to quaternary structure, part of the 50S ribosomal subunit; part of the 5S rRNA/L5/L18/L25 subcomplex. Contacts the 5S and 23S rRNAs.

This is one of the proteins that bind and probably mediate the attachment of the 5S RNA into the large ribosomal subunit, where it forms part of the central protuberance. This chain is Large ribosomal subunit protein uL18, found in Shewanella halifaxensis (strain HAW-EB4).